The chain runs to 350 residues: Holliday junction branch migration complex subunit RuvB (350 aa).

The interval 1–184 (MSKTPERLVT…FGIPIRLEFY (184 aa)) is large ATPase domain (RuvB-L). ATP is bound by residues Leu-23, Arg-24, Gly-65, Lys-68, Thr-69, Thr-70, 131–133 (EDF), Arg-174, Tyr-184, and Arg-221. A Mg(2+)-binding site is contributed by Thr-69. The tract at residues 185-255 (TIEELERIVL…LADKALSLLD (71 aa)) is small ATPAse domain (RuvB-S). The tract at residues 258–350 (PIGLDQMDRR…GLFPDQSEED (93 aa)) is head domain (RuvB-H). 3 residues coordinate DNA: Arg-294, Arg-313, and Arg-318.

Belongs to the RuvB family. Homohexamer. Forms an RuvA(8)-RuvB(12)-Holliday junction (HJ) complex. HJ DNA is sandwiched between 2 RuvA tetramers; dsDNA enters through RuvA and exits via RuvB. An RuvB hexamer assembles on each DNA strand where it exits the tetramer. Each RuvB hexamer is contacted by two RuvA subunits (via domain III) on 2 adjacent RuvB subunits; this complex drives branch migration. In the full resolvosome a probable DNA-RuvA(4)-RuvB(12)-RuvC(2) complex forms which resolves the HJ.

It localises to the cytoplasm. It catalyses the reaction ATP + H2O = ADP + phosphate + H(+). Functionally, the RuvA-RuvB-RuvC complex processes Holliday junction (HJ) DNA during genetic recombination and DNA repair, while the RuvA-RuvB complex plays an important role in the rescue of blocked DNA replication forks via replication fork reversal (RFR). RuvA specifically binds to HJ cruciform DNA, conferring on it an open structure. The RuvB hexamer acts as an ATP-dependent pump, pulling dsDNA into and through the RuvAB complex. RuvB forms 2 homohexamers on either side of HJ DNA bound by 1 or 2 RuvA tetramers; 4 subunits per hexamer contact DNA at a time. Coordinated motions by a converter formed by DNA-disengaged RuvB subunits stimulates ATP hydrolysis and nucleotide exchange. Immobilization of the converter enables RuvB to convert the ATP-contained energy into a lever motion, pulling 2 nucleotides of DNA out of the RuvA tetramer per ATP hydrolyzed, thus driving DNA branch migration. The RuvB motors rotate together with the DNA substrate, which together with the progressing nucleotide cycle form the mechanistic basis for DNA recombination by continuous HJ branch migration. Branch migration allows RuvC to scan DNA until it finds its consensus sequence, where it cleaves and resolves cruciform DNA. This Beijerinckia indica subsp. indica (strain ATCC 9039 / DSM 1715 / NCIMB 8712) protein is Holliday junction branch migration complex subunit RuvB.